A 343-amino-acid chain; its full sequence is 4-hydroxy-2-oxovalerate aldolase (343 aa).

The Pyruvate carboxyltransferase domain maps to P4 to M254. Residue R12 to D13 coordinates substrate. Position 13 (D13) interacts with Mn(2+). The active-site Proton acceptor is the H16. Substrate-binding residues include S166 and H193. Mn(2+) contacts are provided by H193 and H195. Y284 serves as a coordination point for substrate.

Belongs to the 4-hydroxy-2-oxovalerate aldolase family.

It carries out the reaction (S)-4-hydroxy-2-oxopentanoate = acetaldehyde + pyruvate. This chain is 4-hydroxy-2-oxovalerate aldolase, found in Chloroflexus aurantiacus (strain ATCC 29364 / DSM 637 / Y-400-fl).